The following is a 247-amino-acid chain: Aliphatic sulfonates import ATP-binding protein SsuB 2 (247 aa).

The ABC transporter domain occupies 28–242 (VSVRGLQRRY…ALRPILLEEL (215 aa)). 60-67 (GESGCGKT) lines the ATP pocket.

Belongs to the ABC transporter superfamily. Aliphatic sulfonates importer (TC 3.A.1.17.2) family. As to quaternary structure, the complex is composed of two ATP-binding proteins (SsuB), two transmembrane proteins (SsuC) and a solute-binding protein (SsuA).

It localises to the cell inner membrane. The enzyme catalyses ATP + H2O + aliphatic sulfonate-[sulfonate-binding protein]Side 1 = ADP + phosphate + aliphatic sulfonateSide 2 + [sulfonate-binding protein]Side 1.. Part of the ABC transporter complex SsuABC involved in aliphatic sulfonates import. Responsible for energy coupling to the transport system. This Paraburkholderia xenovorans (strain LB400) protein is Aliphatic sulfonates import ATP-binding protein SsuB 2.